We begin with the raw amino-acid sequence, 107 residues long: Rhodocoxin (107 aa).

The region spanning 2–106 (PTVTYVHPDG…GLIVRLPEEQ (105 aa)) is the 2Fe-2S ferredoxin-type domain. Residues Cys40, Cys46, Cys49, and Cys87 each contribute to the [2Fe-2S] cluster site.

It belongs to the adrenodoxin/putidaredoxin family. It depends on [2Fe-2S] cluster as a cofactor.

Ferredoxin-type protein which transfers electrons from rhodocoxin reductase to cytochrome CYP116 (ThcB), which is involved in the degradation of thiocarbamate herbicides. The protein is Rhodocoxin (thcC) of Rhodococcus erythropolis (Arthrobacter picolinophilus).